The chain runs to 90 residues: MQYCELDLSGQWLDTVYCEENFSDFVFIKFLNPSQFEEKIYCYTLHITKRTLENKRLLLYYEDEFKKHGHDINELVGDGIILRSCWNPRQ.

The protein resides in the cytoplasm. This is an uncharacterized protein from Saccharomyces cerevisiae (strain ATCC 204508 / S288c) (Baker's yeast).